The chain runs to 567 residues: Wee1-like protein kinase 2 (567 aa).

Composition is skewed to basic and acidic residues over residues 1 to 12 (MDDKDIDKELRQ), 25 to 35 (EGQKKVEESRE), 42 to 51 (EKGEVQDSEA), and 64 to 77 (HELD…KESP). Residues 1–117 (MDDKDIDKEL…DSPSTPKTML (117 aa)) form a disordered region. At serine 76 the chain carries Phosphoserine. The Nuclear localization signal signature appears at 173-175 (KRK). In terms of domain architecture, Protein kinase spans 212 to 486 (FLEVEKIGVG…AAALARNTVL (275 aa)). Residues 218 to 226 (IGVGEFGTV) and lysine 241 each bind ATP. The Nuclear export signal motif lies at 315-329 (KLKDILLQISLGLNY). The active-site Proton acceptor is the aspartate 339. Residues asparagine 344 and aspartate 380 each coordinate Mg(2+). Residues 494–519 (EELQQQLNLEKFKTATLERELREAQQ) adopt a coiled-coil conformation. Positions 514–567 (LREAQQAQSPQGYTHHGDTGVSGTHTGSRSTKRLVGGKSARSSSFTSGEREPLH) are disordered.

It belongs to the protein kinase superfamily. Ser/Thr protein kinase family. WEE1 subfamily. Phosphorylated on serine residues. Phosphorylation leads to increase its activity. In terms of tissue distribution, expressed in oocytes (at protein level). May also be expressed in testis.

It localises to the nucleus. It catalyses the reaction L-tyrosyl-[protein] + ATP = O-phospho-L-tyrosyl-[protein] + ADP + H(+). Functionally, oocyte-specific protein tyrosine kinase that phosphorylates and inhibits CDK1/CDC2 and acts as a key regulator of meiosis during both prophase I and metaphase II. Required to maintain meiotic arrest in oocytes during the germinal vesicle (GV) stage, a long period of quiescence at dictyate prophase I, by phosphorylating CDK1 at 'Tyr-15', leading to inhibit CDK1 activity and prevent meiotic reentry. Also required for metaphase II exit during egg activation by phosphorylating CDK1 at 'Tyr-15', to ensure exit from meiosis in oocytes and promote pronuclear formation. In Homo sapiens (Human), this protein is Wee1-like protein kinase 2 (WEE2).